The sequence spans 329 residues: DNA-directed RNA polymerase subunit alpha (329 aa).

The alpha N-terminal domain (alpha-NTD) stretch occupies residues 1 to 234 (MQGSVTEFLK…EQLDAFVELR (234 aa)). Residues 248-329 (FDPILLRPVD…WPPASLADDL (82 aa)) are alpha C-terminal domain (alpha-CTD).

This sequence belongs to the RNA polymerase alpha chain family. Homodimer. The RNAP catalytic core consists of 2 alpha, 1 beta, 1 beta' and 1 omega subunit. When a sigma factor is associated with the core the holoenzyme is formed, which can initiate transcription.

The catalysed reaction is RNA(n) + a ribonucleoside 5'-triphosphate = RNA(n+1) + diphosphate. Functionally, DNA-dependent RNA polymerase catalyzes the transcription of DNA into RNA using the four ribonucleoside triphosphates as substrates. The chain is DNA-directed RNA polymerase subunit alpha from Shewanella putrefaciens (strain CN-32 / ATCC BAA-453).